Consider the following 753-residue polypeptide: Polyadenylate-binding protein, cytoplasmic and nuclear (753 aa).

Over residues 1-43 the composition is skewed to low complexity; sequence MSAEASTTPAAETPVNGTPETSTTPAAPAAEATAAETAAPSTS. The segment at 1-49 is disordered; it reads MSAEASTTPAAETPVNGTPETSTTPAAPAAEATAAETAAPSTSQPHSAS. 4 consecutive RRM domains span residues 48–126, 136–213, 229–306, and 332–460; these read ASLY…WSQR, GNVF…HHIS, TNVY…RAQK, and VNLY…LAQR. Disordered regions lie at residues 363–417, 607–649, and 727–753; these read VMRD…SDKK, RGPG…PAAG, and GTEG…ENKS. Over residues 376–417 the composition is skewed to basic and acidic residues; it reads DSDKEKKEESKEEKPEAAEKTEEAAKESGDDQDKENKKSDKK. The segment covering 607 to 619 has biased composition (gly residues); sequence RGPGYGQGRGGVP. Positions 633-649 are enriched in low complexity; the sequence is QNAQPAAGRGEEAPAAG. A PABC domain is found at 647–724; that stretch reads AAGLTAQSLA…ALSVYDEYMK (78 aa). Residues 737 to 753 are compositionally biased toward basic and acidic residues; the sequence is PKPKEAATEESTEENKS.

It belongs to the polyadenylate-binding protein type-1 family.

The protein localises to the cytoplasm. The protein resides in the nucleus. Functionally, binds the poly(A) tail of mRNA. Appears to be an important mediator of the multiple roles of the poly(A) tail in mRNA biogenesis, stability and translation. In the nucleus, involved in both mRNA cleavage and polyadenylation. Is also required for efficient mRNA export to the cytoplasm. Acts in concert with a poly(A)-specific nuclease (PAN) to affect poly(A) tail shortening, which may occur concomitantly with either nucleocytoplasmic mRNA transport or translational initiation. In the cytoplasm, stimulates translation initiation and regulates mRNA decay through translation termination-coupled poly(A) shortening, probably mediated by PAN. The sequence is that of Polyadenylate-binding protein, cytoplasmic and nuclear (pab1) from Aspergillus terreus (strain NIH 2624 / FGSC A1156).